The sequence spans 447 residues: Elongation factor 1-alpha (447 aa).

The tr-type G domain occupies 5-230 (KFHINIVVIG…DQINDAKRPS (226 aa)). The segment at 14–21 (GHVDSGKS) is G1. 14–21 (GHVDSGKS) serves as a coordination point for GTP. Lys-55 carries the post-translational modification N6,N6-dimethyllysine. The interval 70-74 (GITID) is G2. Position 79 is an N6,N6,N6-trimethyllysine (Lys-79). The interval 91–94 (DAPG) is G3. Residues 91–95 (DAPGH) and 153–156 (NKMD) each bind GTP. The tract at residues 153–156 (NKMD) is G4. Position 187 is an N6,N6,N6-trimethyllysine (Lys-187). Residues 194–196 (SGF) form a G5 region. Lys-261 carries the post-translational modification N6-methyllysine. Position 289 is a 5-glutamyl glycerylphosphorylethanolamine (Glu-289). The residue at position 306 (Lys-306) is an N6,N6,N6-trimethyllysine. Glu-362 is subject to 5-glutamyl glycerylphosphorylethanolamine. N6,N6,N6-trimethyllysine is present on Lys-396.

This sequence belongs to the TRAFAC class translation factor GTPase superfamily. Classic translation factor GTPase family. EF-Tu/EF-1A subfamily. Was detected in all tissues examined but was most abundant in roots and salt-adapted cultured cells.

It localises to the cytoplasm. Its function is as follows. This protein promotes the GTP-dependent binding of aminoacyl-tRNA to the A-site of ribosomes during protein biosynthesis. This Nicotiana tabacum (Common tobacco) protein is Elongation factor 1-alpha.